We begin with the raw amino-acid sequence, 23 residues long: Aurein-4.3 (23 aa).

It belongs to the frog skin active peptide (FSAP) family. Aurein subfamily. As to expression, expressed by the skin dorsal glands.

It is found in the secreted. Its function is as follows. Has no antimicrobial or anticancer activity. The polypeptide is Aurein-4.3 (Ranoidea aurea (Green and golden bell frog)).